The sequence spans 315 residues: Aspartate carbamoyltransferase catalytic subunit (315 aa).

Positions 64 and 65 each coordinate carbamoyl phosphate. Lysine 92 serves as a coordination point for L-aspartate. Carbamoyl phosphate contacts are provided by arginine 114, histidine 142, and glutamine 145. Residues arginine 175 and arginine 229 each coordinate L-aspartate. 2 residues coordinate carbamoyl phosphate: glycine 270 and proline 271.

This sequence belongs to the aspartate/ornithine carbamoyltransferase superfamily. ATCase family. In terms of assembly, heterododecamer (2C3:3R2) of six catalytic PyrB chains organized as two trimers (C3), and six regulatory PyrI chains organized as three dimers (R2).

It carries out the reaction carbamoyl phosphate + L-aspartate = N-carbamoyl-L-aspartate + phosphate + H(+). It functions in the pathway pyrimidine metabolism; UMP biosynthesis via de novo pathway; (S)-dihydroorotate from bicarbonate: step 2/3. Functionally, catalyzes the condensation of carbamoyl phosphate and aspartate to form carbamoyl aspartate and inorganic phosphate, the committed step in the de novo pyrimidine nucleotide biosynthesis pathway. The sequence is that of Aspartate carbamoyltransferase catalytic subunit from Methylorubrum extorquens (strain CM4 / NCIMB 13688) (Methylobacterium extorquens).